The following is a 222-amino-acid chain: N-(5'-phosphoribosyl)anthranilate isomerase (222 aa).

Belongs to the TrpF family.

It catalyses the reaction N-(5-phospho-beta-D-ribosyl)anthranilate = 1-(2-carboxyphenylamino)-1-deoxy-D-ribulose 5-phosphate. Its pathway is amino-acid biosynthesis; L-tryptophan biosynthesis; L-tryptophan from chorismate: step 3/5. This chain is N-(5'-phosphoribosyl)anthranilate isomerase, found in Rhizobium rhizogenes (strain K84 / ATCC BAA-868) (Agrobacterium radiobacter).